The following is a 193-amino-acid chain: Thymidine kinase (193 aa).

9-16 (AAMNAGKS) serves as a coordination point for ATP.

This sequence belongs to the thymidine kinase family.

It carries out the reaction thymidine + ATP = dTMP + ADP + H(+). This thymidine kinase is one of the enzymes that catalyze DNA precursor synthesis. Although tk is a nonessential gene, some strains of host E.coli do not support the growth of phages that lack this gene. In Escherichia coli (Bacteriophage T4), this protein is Thymidine kinase (TK).